The primary structure comprises 156 residues: Small ribosomal subunit protein uS7 (156 aa).

This sequence belongs to the universal ribosomal protein uS7 family. As to quaternary structure, part of the 30S ribosomal subunit. Contacts proteins S9 and S11.

One of the primary rRNA binding proteins, it binds directly to 16S rRNA where it nucleates assembly of the head domain of the 30S subunit. Is located at the subunit interface close to the decoding center, probably blocks exit of the E-site tRNA. The chain is Small ribosomal subunit protein uS7 from Metamycoplasma arthritidis (strain 158L3-1) (Mycoplasma arthritidis).